The sequence spans 359 residues: Outer membrane protein assembly factor BamC (359 aa).

Positions 1-21 (MSTLNKYKTLIIISSLAAVSS) are cleaved as a signal peptide. Residue Cys-22 is the site of N-palmitoyl cysteine attachment. A lipid anchor (S-diacylglycerol cysteine) is attached at Cys-22.

It belongs to the BamC family. As to quaternary structure, part of the Bam complex.

The protein localises to the cell outer membrane. Its function is as follows. Part of the outer membrane protein assembly complex, which is involved in assembly and insertion of beta-barrel proteins into the outer membrane. In Kangiella koreensis (strain DSM 16069 / JCM 12317 / KCTC 12182 / SW-125), this protein is Outer membrane protein assembly factor BamC.